Here is a 254-residue protein sequence, read N- to C-terminus: Low affinity immunoglobulin gamma Fc region receptor III-A (254 aa).

The first 20 residues, 1 to 20, serve as a signal peptide directing secretion; it reads MWQLLLPTALLLLVSAGMRA. Ig-like C2-type domains lie at 24–105 and 107–189; these read PKAV…LEVH and GWLL…VNIT. Disulfide bonds link Cys-47-Cys-89 and Cys-128-Cys-172. An N-linked (GlcNAc...) asparagine glycan is attached at Asn-187. Residues 207–229 traverse the membrane as a helical segment; the sequence is YQVSFCLVMVLLFAVDTGLYFSV. The interval 234–254 is disordered; sequence PSSTSDWKDHKFKWSKDPQDK. The segment covering 239–254 has biased composition (basic and acidic residues); that stretch reads DWKDHKFKWSKDPQDK.

In terms of assembly, forms a heterooligomeric complex with ITAM-containing signaling subunits, either a homodimer of CD247, a homodimer of FCER1G or a heterodimer of CD247 and FCER1G, to form a functional receptor complex. Interacts (via transmembrane domain) with signaling subunits; this interaction is a prerequisite for receptor complex expression on the cell surface and intracellular signal transduction. Binds the Fc region of antigen-complexed IgG with a preference for IgG1 and IgG3 isotypes. Interacts with CD2; this interaction is involved in NK cell activation and cytotoxicity. Interacts with S100A4; this interaction inhibits PKC-dependent phosphorylation of FCGR3A. Glycosylated. Glycosylation plays an inhibitory role in the interaction with IgG1 and IgG2. Post-translationally, undergoes rapid ectodomain shedding upon NK cell stimulation. The soluble form is produced by a proteolytic cleavage mediated by ADAM17. Repeated stimulation causes receptor shedding, a mechanism that allows for increased NK cell motility and detachment from opsonized target cells while avoiding activation-induced NK cell apoptosis. Lymphocytes and monocytes.

Its subcellular location is the cell membrane. It localises to the secreted. Receptor for the invariable Fc fragment of immunoglobulin gamma (IgG). Optimally activated upon binding of clustered antigen-IgG complexes displayed on cell surfaces, triggers lysis of antibody-coated cells, a process known as antibody-dependent cellular cytotoxicity (ADCC). Does not bind free monomeric IgG, thus avoiding inappropriate effector cell activation in the absence of antigenic trigger. Mediates IgG effector functions on natural killer (NK) cells. Binds antigen-IgG complexes generated upon infection and triggers NK cell-dependent cytokine production and degranulation to limit viral load and propagation. Involved in the generation of memory-like adaptive NK cells capable to produce high amounts of IFNG and to efficiently eliminate virus-infected cells via ADCC. Regulates NK cell survival and proliferation, in particular by preventing NK cell progenitor apoptosis. Fc-binding subunit that associates with CD247 and/or FCER1G adapters to form functional signaling complexes. Following the engagement of antigen-IgG complexes, triggers phosphorylation of immunoreceptor tyrosine-based activation motif (ITAM)-containing adapters with subsequent activation of phosphatidylinositol 3-kinase signaling and sustained elevation of intracellular calcium that ultimately drive NK cell activation. The ITAM-dependent signaling coupled to receptor phosphorylation by PKC mediates robust intracellular calcium flux that leads to production of pro-inflammatory cytokines, whereas in the absence of receptor phosphorylation it mainly activates phosphatidylinositol 3-kinase signaling leading to cell degranulation. Costimulates NK cells and trigger lysis of target cells independently of IgG binding. Mediates the antitumor activities of therapeutic antibodies. Upon ligation on monocytes triggers TNFA-dependent ADCC of IgG-coated tumor cells. Mediates enhanced ADCC in response to afucosylated IgGs. This chain is Low affinity immunoglobulin gamma Fc region receptor III-A (FCGR3A), found in Papio anubis (Olive baboon).